We begin with the raw amino-acid sequence, 594 residues long: Lysine--tRNA ligase cla4 (594 aa).

The disordered stretch occupies residues 1-62 (MADPGAVKET…KETSSEQDEA (62 aa)). Basic and acidic residues predominate over residues 18 to 42 (TGEKVSKTELKKRLKSRAKEAEKQK).

The protein belongs to the class-II aminoacyl-tRNA synthetase family. As to quaternary structure, homodimer.

It catalyses the reaction tRNA(Lys) + L-lysine + ATP = L-lysyl-tRNA(Lys) + AMP + diphosphate. In terms of biological role, involved in self-resistance to cladosporin since this product is an inhibitor of lysyl-tRNA synthetase. Cla4 may not be inhibited by cladosporin, thereby imparting cladosporin resistance. When cladosporin biosynthesis is switched on, transcription of cla4 will then be necessary for continued protein synthesis in C.cladosporioides. This is Lysine--tRNA ligase cla4 from Cladosporium cladosporioides.